The sequence spans 122 residues: Large ribosomal subunit protein uL18 (122 aa).

Belongs to the universal ribosomal protein uL18 family. Part of the 50S ribosomal subunit; part of the 5S rRNA/L5/L18/L25 subcomplex. Contacts the 5S and 23S rRNAs.

Functionally, this is one of the proteins that bind and probably mediate the attachment of the 5S RNA into the large ribosomal subunit, where it forms part of the central protuberance. The polypeptide is Large ribosomal subunit protein uL18 (Prochlorococcus marinus (strain AS9601)).